A 316-amino-acid chain; its full sequence is Acetaldehyde dehydrogenase (316 aa).

Residue 12 to 15 participates in NAD(+) binding; the sequence is SGNI. Cys132 acts as the Acyl-thioester intermediate in catalysis. NAD(+)-binding positions include 163–171 and Asn289; that span reads SAGPGTRAN.

Belongs to the acetaldehyde dehydrogenase family.

It carries out the reaction acetaldehyde + NAD(+) + CoA = acetyl-CoA + NADH + H(+). The polypeptide is Acetaldehyde dehydrogenase (bphG) (Bordetella avium (strain 197N)).